A 515-amino-acid polypeptide reads, in one-letter code: Vacuolar segregation protein PEP7 (515 aa).

The C2H2-type zinc finger occupies 6–29; the sequence is VSCPICLRKFDNLQALNAHLDVEH. The interval 36–58 is disordered; the sequence is DSLGSNDSRLVNGKQKKARSVDS. An FYVE-type 1; atypical zinc finger spans residues 72–137; that stretch reads KKGKSCCHTC…CCHDCFVTKP (66 aa). The Zn(2+) site is built by cysteine 78, cysteine 81, cysteine 94, cysteine 97, cysteine 102, histidine 105, cysteine 129, cysteine 132, cysteine 221, cysteine 224, cysteine 237, cysteine 240, cysteine 245, cysteine 252, cysteine 289, and cysteine 292. The FYVE-type 2 zinc finger occupies 215–297; sequence DRSVLFCNIC…LCSHCIDMLF (83 aa).

Interacts with VPS21, VPS45, PEP3 and PEP5.

The protein resides in the vacuole membrane. Its function is as follows. Required for vacuole segregation and vacuole protein sorting. Possibly part of a complex which tethers the vacuole membrane to microtubules, either directly or via kinesin or dynein-like motor proteins. Probably functions in several interorganelle traffic pathways. The sequence is that of Vacuolar segregation protein PEP7 (PEP7) from Saccharomyces cerevisiae (strain ATCC 204508 / S288c) (Baker's yeast).